We begin with the raw amino-acid sequence, 651 residues long: MNSSVFPRLRFACKLSLAVVLSLVLGFWFEMETPRWAALTAAIVAAGPAFVAGGDPFSGAIRHRGLLRILGTFIGCFGALVIIMTTVRAPVVMLMLCCLWAGVCVWISSLVKTENSYVFALAGYTALIIIITSQSSPRAIPQFAIERCSEIILGIVCVILADLVFSPRSVKQDVDRAIDDLLLGQYQLLQRCVGRAATDDVDSCWHGLLRKTQAIGGMRNILLMESSHWQPAWRRMKTLLSQSWMMMTLAGEIGLMRRDGDCVVKGGLLMLLEQPVTTPGDLRRQLRQLRHLAASHSSRLPAPLVGWLAASSRYQLLAAGIRTNARISQRETEILEAETPVRASSAETHHALINGLRTGVATAVGCLFWLLTGWTSGSVCMVMLGVVTALVMRLPNPLMAAKDFLIGTLIALPLGAVMFMLVLPATQQSLLLLGLCIGVMTFVIGIEIQKRRLGSLGALASTINILVLDNPMTFNLSQFLDNAIGQIIGCVLALAVIMLIRDNSRARTGRTLLNRLVHGAIDGLSTRPARCRENHLPALYQHLFLLINLFPGDMAKYRLALSLIIVHQRLRQLDIPLSDTLAECHRQMRATAARVAGAAGDTQRSRYFSQLLTQMEEYRQHLGEHQVADDIVAAVARLTALLQRHQHALCD.

The next 11 helical transmembrane spans lie at 11-31 (FACK…WFEM), 41-61 (AAIV…SGAI), 65-85 (GLLR…IIMT), 91-111 (VVML…SSLV), 117-137 (YVFA…QSSP), 150-170 (EIIL…PRSV), 367-387 (LFWL…LGVV), 404-424 (FLIG…LVLP), 428-448 (QSLL…GIEI), 454-474 (GSLG…PMTF), and 480-500 (LDNA…IMLI).

This sequence belongs to the aromatic acid exporter ArAE (TC 2.A.85) family.

It localises to the cell inner membrane. Functionally, forms an efflux pump with AaeA. Could function as a metabolic relief valve, allowing to eliminate certain compounds when they accumulate to high levels in the cell. The protein is p-hydroxybenzoic acid efflux pump subunit AaeB of Musicola paradisiaca (strain Ech703) (Dickeya paradisiaca).